A 58-amino-acid chain; its full sequence is UPF0339 protein Msl4696 (58 aa).

This sequence belongs to the UPF0339 family.

The protein is UPF0339 protein Msl4696 of Mesorhizobium japonicum (strain LMG 29417 / CECT 9101 / MAFF 303099) (Mesorhizobium loti (strain MAFF 303099)).